A 189-amino-acid chain; its full sequence is Elongation factor P (189 aa).

This sequence belongs to the elongation factor P family.

It localises to the cytoplasm. Its pathway is protein biosynthesis; polypeptide chain elongation. Its function is as follows. Involved in peptide bond synthesis. Stimulates efficient translation and peptide-bond synthesis on native or reconstituted 70S ribosomes in vitro. Probably functions indirectly by altering the affinity of the ribosome for aminoacyl-tRNA, thus increasing their reactivity as acceptors for peptidyl transferase. The protein is Elongation factor P of Xanthobacter autotrophicus (strain ATCC BAA-1158 / Py2).